Consider the following 310-residue polypeptide: tRNA dimethylallyltransferase (310 aa).

Residue 13–20 coordinates ATP; the sequence is GPTASGKT. 15-20 provides a ligand contact to substrate; that stretch reads TASGKT. Interaction with substrate tRNA stretches follow at residues 38–41, 162–166, 243–248, and 276–283; these read DSAL, QRLSR, RCVGYR, and KRQITWLR.

It belongs to the IPP transferase family. As to quaternary structure, monomer. It depends on Mg(2+) as a cofactor.

It catalyses the reaction adenosine(37) in tRNA + dimethylallyl diphosphate = N(6)-dimethylallyladenosine(37) in tRNA + diphosphate. In terms of biological role, catalyzes the transfer of a dimethylallyl group onto the adenine at position 37 in tRNAs that read codons beginning with uridine, leading to the formation of N6-(dimethylallyl)adenosine (i(6)A). This Vibrio parahaemolyticus serotype O3:K6 (strain RIMD 2210633) protein is tRNA dimethylallyltransferase.